Reading from the N-terminus, the 95-residue chain is MLHTLHRSPWLTDFAALLRLLSEGDELLLLQDGVTAAVDGNRYLESLRNAPIKVYALNEDLIARGLTGQISNDIILIDYTDFVRLTVKHPSQMVW.

It belongs to the DsrH/TusB family. Heterohexamer, formed by a dimer of trimers. The hexameric TusBCD complex contains 2 copies each of TusB, TusC and TusD. The TusBCD complex interacts with TusE.

It localises to the cytoplasm. In terms of biological role, part of a sulfur-relay system required for 2-thiolation of 5-methylaminomethyl-2-thiouridine (mnm(5)s(2)U) at tRNA wobble positions. The polypeptide is Protein TusB (Escherichia coli (strain ATCC 8739 / DSM 1576 / NBRC 3972 / NCIMB 8545 / WDCM 00012 / Crooks)).